The primary structure comprises 750 residues: K(+)-insensitive pyrophosphate-energized proton pump (750 aa).

A run of 5 helical transmembrane segments spans residues 1-21, 51-71, 78-98, 133-153, and 161-181; these read MYGLVVCLFGMIFGLIQYQGI, FIIILWALVAAIIVAYFGGLN, VVFILACSLLGIAGSYTVAWF, IGMLLISIELFAMLCILLFIP, and FIGFAIGESLGASVLRIAGGI. Lysine 184 is a binding site for substrate. Residues aspartate 187, aspartate 191, and aspartate 216 each coordinate Mg(2+). The next 6 membrane-spanning stretches (helical) occupy residues 227 to 247, 257 to 277, 301 to 321, 327 to 347, 391 to 411, and 420 to 440; these read DGFETYGVTGVALISFILLAI, LVWIFAMRLVMIVASAVSYWV, LVWLTSIVSIVLTYIASYMLI, GTMWWKLASIITCGTIAGALI, WMGLAIIVLMGAAFGFSTLGL, and VFAFGLVAFGFLSMGPVTIAV. Aspartate 448 is a binding site for Mg(2+). A run of 4 helical transmembrane segments spans residues 503–523, 538–558, 607–627, and 629–649; these read VLIGTAVVGSTTMIFSIIMIL, ILWPPFLLGLLMGGAVIYWFT, GMINLFLTIFFSTLAFACLES, and LFIGYLISIALFGLYQAIFMA. Ca(2+) is bound by residues aspartate 656, aspartate 681, and aspartate 685. Position 688 (lysine 688) interacts with substrate. The next 2 helical transmembrane spans lie at 694–714 and 716–736; these read ALNPIIKFTTLFGLLAIELAI and LPTTISVSLAVVFFLLSLVFV.

The protein belongs to the H(+)-translocating pyrophosphatase (TC 3.A.10) family. K(+)-insensitive subfamily. Homodimer. It depends on Mg(2+) as a cofactor.

The protein resides in the cell inner membrane. It carries out the reaction diphosphate + H2O + H(+)(in) = 2 phosphate + 2 H(+)(out). In terms of biological role, proton pump that utilizes the energy of pyrophosphate hydrolysis as the driving force for proton movement across the membrane. Generates a proton motive force. This Chlorobaculum tepidum (strain ATCC 49652 / DSM 12025 / NBRC 103806 / TLS) (Chlorobium tepidum) protein is K(+)-insensitive pyrophosphate-energized proton pump.